Reading from the N-terminus, the 311-residue chain is uncharacterized protein (311 aa).

10 consecutive transmembrane segments (helical) span residues 6–26 (IFILLTAIFYSTQEISGKMLA), 33–53 (PFQVMMIVFLIGAIILLPMAV), 70–90 (YLALCGILAVSISMSMLQFAV), 97–117 (TAAVLFCTNAVFTIPFAYFIL), 123–143 (GITIVSIIVSLIGVVIIFNPA), 155–175 (LIGICFALVAAVVWSLYTVIS), 185–205 (YVFNCISFFFGVIALLILLVV), 219–239 (ILVLLYMGIFIKAVGYICYLG), 244–264 (TSAVTASTVFLIKPALATVLA), and 265–285 (ILILGESIEVNVVIGIVFIII). 2 consecutive EamA domains span residues 12–141 (AIFY…IIFN) and 166–292 (VVWS…INYS).

Belongs to the EamA transporter family.

Its subcellular location is the cell membrane. This is an uncharacterized protein from Clostridium kluyveri (strain ATCC 8527 / DSM 555 / NBRC 12016 / NCIMB 10680 / K1).